Consider the following 200-residue polypeptide: Probable GTP-binding protein EngB (200 aa).

In terms of domain architecture, EngB-type G spans 22-194 (TLPEVAFVGR…WKEVLRLTLA (173 aa)). GTP contacts are provided by residues 30–37 (GRSNVGKS), 57–61 (GRTQL), 75–78 (DLPG), 142–145 (TKCD), and 173–175 (FSA). Mg(2+) is bound by residues Ser-37 and Thr-59.

Belongs to the TRAFAC class TrmE-Era-EngA-EngB-Septin-like GTPase superfamily. EngB GTPase family. It depends on Mg(2+) as a cofactor.

Functionally, necessary for normal cell division and for the maintenance of normal septation. The polypeptide is Probable GTP-binding protein EngB (Pelobacter propionicus (strain DSM 2379 / NBRC 103807 / OttBd1)).